Here is a 318-residue protein sequence, read N- to C-terminus: MSKSHPRWRLAKKILTWLFFIAVIVLLVVYAKKVDWEEVWKVIRDYNRVALLSAVGLVVVSYLIYGCYDLLARFYCGHKLAKRQVMLVSFICYAFNLTLSTWVGGIGMRYRLYSRLGLPGSTITRIFSLSITTNWLGYILLAGIIFTAGVVELPDHWYVDQTTLRILGIGLLMIIAVYLWFCAFAKHRHMTIKGQKLVLPSWKFALAQMLISSVNWMVMGAIIWLLLGQSVNYFFVLGVLLVSSIAGVIVHIPAGIGVLEAVFIALLAGEHTSKGTIIAALLAYRVLYYFIPLLLALICYLLLESQAKKLRAKNEAAM.

Residues 1–13 (MSKSHPRWRLAKK) are Periplasmic-facing. The helical transmembrane segment at 14–34 (ILTWLFFIAVIVLLVVYAKKV) threads the bilayer. Residues 35–50 (DWEEVWKVIRDYNRVA) are Cytoplasmic-facing. A helical transmembrane segment spans residues 51–71 (LLSAVGLVVVSYLIYGCYDLL). Over 72–85 (ARFYCGHKLAKRQV) the chain is Periplasmic. The helical transmembrane segment at 86-106 (MLVSFICYAFNLTLSTWVGGI) threads the bilayer. At 107–125 (GMRYRLYSRLGLPGSTITR) the chain is on the cytoplasmic side. The helical transmembrane segment at 126 to 146 (IFSLSITTNWLGYILLAGIIF) threads the bilayer. Topologically, residues 147–165 (TAGVVELPDHWYVDQTTLR) are periplasmic. Residues 166–186 (ILGIGLLMIIAVYLWFCAFAK) traverse the membrane as a helical segment. At 187–205 (HRHMTIKGQKLVLPSWKFA) the chain is on the cytoplasmic side. The chain crosses the membrane as a helical span at residues 206–226 (LAQMLISSVNWMVMGAIIWLL). Topologically, residues 227–233 (LGQSVNY) are periplasmic. Helical transmembrane passes span 234–254 (FFVL…HIPA) and 255–275 (GIGV…TSKG). Over 276-277 (TI) the chain is Periplasmic. The chain crosses the membrane as a helical span at residues 278 to 298 (IAALLAYRVLYYFIPLLLALI). The Cytoplasmic portion of the chain corresponds to 299–318 (CYLLLESQAKKLRAKNEAAM).

This sequence to Synechocystis PCC 6803 slr0712.

It localises to the cell inner membrane. In Escherichia coli (strain K12), this protein is Inner membrane protein YbhN (ybhN).